The sequence spans 351 residues: Anaerobic nitrite reductase Glb1-2 (351 aa).

Globin domains lie at 13 to 162 (DFTE…VEMK) and 184 to 333 (CFTE…AEMK). Residues serine 56, lysine 70, histidine 74, lysine 104, threonine 108, histidine 109, serine 227, lysine 241, histidine 245, lysine 275, threonine 279, and histidine 280 each coordinate heme b. The segment at 331-351 (EMKKTDHDHQTNVEDKSKPSS) is disordered.

The protein belongs to the plant globin family. Monomer. Heme b is required as a cofactor. In terms of tissue distribution, predominantly expressed in nodules and roots, and, to a lesser extent, in leaves, at low levels in pods, but barely in stems, petioles, buds and flowers. As to expression, mainly expressed in nodules and roots at low levels, and barely in leaves. Expressed at very low levels in nodules, roots and pods.

It is found in the cytoplasm. It localises to the nucleus. It carries out the reaction Fe(III)-heme b-[protein] + nitric oxide + H2O = Fe(II)-heme b-[protein] + nitrite + 2 H(+). Functionally, phytoglobin that regulates the fine tuning of nitric oxide (NO) concentration in the cytosol in response to sudden changes in O(2) availability, and performs both symbiotic and nonsymbiotic functions. Exhibits NO dioxygenase activity in the presence of O(2) but nitrite reductase (NiR) activity in the absence of O(2) (e.g. during flooding or in waterlogged soil). May not function as an oxygen storage or transport protein. Extremely reactive toward the physiological ligands O(2), nitric oxide (NO), and nitrite with a very high affinity for O(2) through an hexacoordinate heme iron because of a very low dissociation constant. Its function is as follows. Very high affinity for O(2) through two hexacoordinate heme irons. Extremely reactive toward the physiological ligands O(2), nitric oxide (NO), and nitrite. In terms of biological role, very high affinity for O(2) through a single hexacoordinate heme iron. Extremely reactive toward the physiological ligands O(2), nitric oxide (NO), and nitrite. The polypeptide is Anaerobic nitrite reductase Glb1-2 (Medicago truncatula (Barrel medic)).